A 102-amino-acid chain; its full sequence is Small ribosomal subunit protein uS10 (102 aa).

This sequence belongs to the universal ribosomal protein uS10 family. In terms of assembly, part of the 30S ribosomal subunit.

Its function is as follows. Involved in the binding of tRNA to the ribosomes. The polypeptide is Small ribosomal subunit protein uS10 (Nitrosomonas eutropha (strain DSM 101675 / C91 / Nm57)).